A 504-amino-acid polypeptide reads, in one-letter code: Probable cytosol aminopeptidase (504 aa).

Mn(2+) contacts are provided by lysine 276 and aspartate 281. Lysine 288 is an active-site residue. Aspartate 299, aspartate 358, and glutamate 360 together coordinate Mn(2+). Arginine 362 is a catalytic residue.

It belongs to the peptidase M17 family. The cofactor is Mn(2+).

It is found in the cytoplasm. It catalyses the reaction Release of an N-terminal amino acid, Xaa-|-Yaa-, in which Xaa is preferably Leu, but may be other amino acids including Pro although not Arg or Lys, and Yaa may be Pro. Amino acid amides and methyl esters are also readily hydrolyzed, but rates on arylamides are exceedingly low.. The catalysed reaction is Release of an N-terminal amino acid, preferentially leucine, but not glutamic or aspartic acids.. In terms of biological role, presumably involved in the processing and regular turnover of intracellular proteins. Catalyzes the removal of unsubstituted N-terminal amino acids from various peptides. In Bordetella avium (strain 197N), this protein is Probable cytosol aminopeptidase.